Reading from the N-terminus, the 273-residue chain is SPRY domain-containing SOCS box protein 1 (273 aa).

A Phosphotyrosine modification is found at Tyr-31. The 199-residue stretch at Lys-33 to Asp-231 folds into the B30.2/SPRY domain. Residues Pro-232–Gln-273 form the SOCS box domain.

It belongs to the SPSB family. As to quaternary structure, component of the probable ECS(SPSB1) E3 ubiquitin-protein ligase complex which contains CUL5, RNF7/RBX2, Elongin BC complex and SPSB1. Interacts with CUL5, RNF7, ELOB and ELOC. Directly interacts with MET tyrosine kinase domain in the presence and in the absence of HGF, however HGF treatment has a positive effect on this interaction. When phosphorylated, interacts with RASA1 without affecting its stability. Interacts (via B30.2/SPRY domain) with PAWR; this interaction is direct and occurs in association with the Elongin BC complex. Interacts with NOS2 and EPHB2.

It is found in the cytoplasm. Its subcellular location is the cytosol. The protein operates within protein modification; protein ubiquitination. Functionally, substrate recognition component of a SCF-like ECS (Elongin BC-CUL2/5-SOCS-box protein) E3 ubiquitin-protein ligase complex which mediates the ubiquitination and subsequent proteasomal degradation of target proteins. Negatively regulates nitric oxide (NO) production and limits cellular toxicity in activated macrophages by mediating the ubiquitination and proteasomal degradation of NOS2. Acts as a bridge which links NOS2 with the ECS E3 ubiquitin ligase complex components ELOC and CUL5. This Bos taurus (Bovine) protein is SPRY domain-containing SOCS box protein 1 (SPSB1).